A 65-amino-acid chain; its full sequence is Large ribosomal subunit protein uL29 (65 aa).

This sequence belongs to the universal ribosomal protein uL29 family.

This chain is Large ribosomal subunit protein uL29, found in Acinetobacter baumannii (strain AB307-0294).